A 434-amino-acid chain; its full sequence is Adenylosuccinate synthetase (434 aa).

GTP-binding positions include 22–28 and 50–52; these read GDEGKGK and GHT. Aspartate 23 acts as the Proton acceptor in catalysis. The Mg(2+) site is built by aspartate 23 and glycine 50. IMP is bound by residues 23-26, 48-51, threonine 139, arginine 153, glutamine 234, threonine 249, and arginine 313; these read DEGK and NAGH. Histidine 51 acts as the Proton donor in catalysis. 309 to 315 is a binding site for substrate; sequence ATTGRKR. Residues arginine 315, 341–343, and 423–425 each bind GTP; these read KLD and SVG.

The protein belongs to the adenylosuccinate synthetase family. In terms of assembly, homodimer. The cofactor is Mg(2+).

The protein localises to the cytoplasm. It carries out the reaction IMP + L-aspartate + GTP = N(6)-(1,2-dicarboxyethyl)-AMP + GDP + phosphate + 2 H(+). The protein operates within purine metabolism; AMP biosynthesis via de novo pathway; AMP from IMP: step 1/2. In terms of biological role, plays an important role in the de novo pathway of purine nucleotide biosynthesis. Catalyzes the first committed step in the biosynthesis of AMP from IMP. The chain is Adenylosuccinate synthetase from Chlorobium phaeovibrioides (strain DSM 265 / 1930) (Prosthecochloris vibrioformis (strain DSM 265)).